The following is a 54-amino-acid chain: Ovomucoid (54 aa).

Residues 4–54 enclose the Kazal-like domain; the sequence is VDCSDYPKPSCTLEDKPLCGSDNQTYSNKCSFCNAVVDSNGTLTLSHFGKC. Intrachain disulfides connect C6/C36, C14/C33, and C22/C54. An N-linked (GlcNAc...) asparagine glycan is attached at N43.

It is found in the secreted. The polypeptide is Ovomucoid (Megapodius freycinet (Dusky scrubfowl)).